The primary structure comprises 180 residues: Translation initiation factor IF-3 (180 aa).

It belongs to the IF-3 family. In terms of assembly, monomer.

It is found in the cytoplasm. Its function is as follows. IF-3 binds to the 30S ribosomal subunit and shifts the equilibrium between 70S ribosomes and their 50S and 30S subunits in favor of the free subunits, thus enhancing the availability of 30S subunits on which protein synthesis initiation begins. This chain is Translation initiation factor IF-3, found in Xylella fastidiosa (strain 9a5c).